Reading from the N-terminus, the 510-residue chain is Protein disulfide-isomerase (510 aa).

An N-terminal signal peptide occupies residues 1–19 (MLRRALLCLAVAAAPGLYA). The region spanning 20-136 (DAPEEEDHVL…IVNWLKKRTG (117 aa)) is the Thioredoxin 1 domain. Residues Cys-55 and Cys-58 each act as nucleophile in the active site. A disulfide bridge connects residues Cys-55 and Cys-58. The residue at position 202 (Lys-202) is an N6-acetyllysine. N6-succinyllysine is present on residues Lys-224 and Lys-273. Ser-333 and Ser-359 each carry phosphoserine. Residues 351–477 (GKIKPHLMSQ…FKKFLESGGQ (127 aa)) form the Thioredoxin 2 domain. Residues Cys-399 and Cys-402 each act as nucleophile in the active site. Cys-399 and Cys-402 form a disulfide bridge. The residue at position 429 (Ser-429) is a Phosphoserine. Positions 473 to 510 (ESGGQDGAGDDDDLEDLEEAEEPDMEEDDDQKAVKDEL) are disordered. Positions 480-502 (AGDDDDLEDLEEAEEPDMEEDDD) are enriched in acidic residues. The Prevents secretion from ER motif lies at 507 to 510 (KDEL).

Belongs to the protein disulfide isomerase family. As to quaternary structure, heterodimer; heterodimerizes with the protein microsomal triglyceride transfer MTTP. Homodimer. Homodimer. Monomers and homotetramers may also occur. Interacts with P4HA2, forming a heterotetramer consisting of 2 alpha subunits (P4HA2) and 2 beta (P4HB), where P4HB plays the role of a structural subunit; this tetramer catalyzes the formation of 4-hydroxyproline in collagen. Also constitutes the structural subunit of the microsomal triacylglycerol transfer protein MTTP in mammalian cells. Stabilizes both enzymes and retain them in the ER without contributing to the catalytic activity. Binds UBQLN1. Interacts with ERO1B. Interacts with ILDR2. Interacts with ERN1/IRE1A (via N-terminus); the interaction is enhanced by phosphorylation of P4HB by FAM20C in response to endoplasmic reticulum stress and results in attenuation of ERN1 activity. In terms of processing, phosphorylation of Ser-359 by FAM20C is induced by endoplasmic reticulum stress and results in a functional switch from oxidoreductase to molecular chaperone. It also promotes interaction with ERN1.

The protein resides in the endoplasmic reticulum. The protein localises to the endoplasmic reticulum lumen. Its subcellular location is the melanosome. It localises to the cell membrane. The catalysed reaction is Catalyzes the rearrangement of -S-S- bonds in proteins.. This multifunctional protein catalyzes the formation, breakage and rearrangement of disulfide bonds. At the cell surface, seems to act as a reductase that cleaves disulfide bonds of proteins attached to the cell. May therefore cause structural modifications of exofacial proteins. Inside the cell, seems to form/rearrange disulfide bonds of nascent proteins. At high concentrations and following phosphorylation by FAM20C, functions as a chaperone that inhibits aggregation of misfolded proteins. At low concentrations, facilitates aggregation (anti-chaperone activity). May be involved with other chaperones in the structural modification of the TG precursor in hormone biogenesis. Also acts as a structural subunit of various enzymes such as prolyl 4-hydroxylase and microsomal triacylglycerol transfer protein MTTP. Receptor for LGALS9; the interaction retains P4HB at the cell surface of Th2 T helper cells, increasing disulfide reductase activity at the plasma membrane, altering the plasma membrane redox state and enhancing cell migration. The sequence is that of Protein disulfide-isomerase (P4HB) from Macaca fuscata fuscata (Japanese macaque).